The following is a 201-amino-acid chain: Glutathione S-transferase GstA (201 aa).

One can recognise a GST N-terminal domain in the interval 1–81 (MKLFYKPGAC…YLADSVPDRQ (81 aa)). Glutathione contacts are provided by residues C10, K35, V52, 65 to 66 (EG), N99, and 103 to 106 (TELH). The region spanning 87-201 (NSISRYKTIE…QDALSAEGLK (115 aa)) is the GST C-terminal domain.

Belongs to the GST superfamily. Beta family. As to quaternary structure, homodimer.

The protein resides in the cytoplasm. The enzyme catalyses RX + glutathione = an S-substituted glutathione + a halide anion + H(+). Its function is as follows. Conjugation of reduced glutathione to a wide number of exogenous and endogenous hydrophobic electrophiles. This Escherichia coli O157:H7 protein is Glutathione S-transferase GstA (gstA).